Here is a 72-residue protein sequence, read N- to C-terminus: Protein kish-A (72 aa).

Positions M1 to S26 are cleaved as a signal peptide. The Extracellular portion of the chain corresponds to L27–K53. The N-linked (GlcNAc...) asparagine glycan is linked to N35. A helical membrane pass occupies residues S54 to S71. Residue E72 is a topological domain, cytoplasmic.

It belongs to the KISH family.

The protein resides in the golgi apparatus membrane. In terms of biological role, involved in the early part of the secretory pathway. This is Protein kish-A (tmem167a) from Danio rerio (Zebrafish).